Reading from the N-terminus, the 271-residue chain is CAAX prenyl protease 2 (271 aa).

Residues 1 to 9 (MISSYKYNP) are Extracellular-facing. The helical transmembrane segment at 10-30 (KLYFLSTFVVTYILWFTGAYL) threads the bilayer. Residues 31–38 (SFSSTYSG) lie on the Cytoplasmic side of the membrane. The helical transmembrane segment at 39 to 59 (IYMLIMLPGLMAPFIISTILI) threads the bilayer. Topologically, residues 60-82 (AKSKNNELKKDFINRLFNLKLIN) are extracellular. A helical membrane pass occupies residues 83–105 (LKTIPVVFLLMPAVILLSILLSI). Residues 106-125 (PFGGSISQFQFSGGFSFSTD) lie on the Cytoplasmic side of the membrane. The chain crosses the membrane as a helical span at residues 126-149 (FVPVLFLLLLAATFEELGWRGYAF). Glu140 (proton donor/acceptor) is an active-site residue. Residues 150 to 159 (DSLQSRYSLF) lie on the Extracellular side of the membrane. Residues 160–179 (KASILFGIFWSLWHFPLIFV) form a helical membrane-spanning segment. The active-site Proton donor/acceptor is the His173. The Cytoplasmic portion of the chain corresponds to 180–192 (NNSYQYEIFNQSI). The helical transmembrane segment at 193–213 (WYGLNFFLSILPMGIIITWMC) threads the bilayer. The Extracellular segment spans residues 214–219 (LKNRKS). The helical transmembrane segment at 220–237 (IILAIIFHFLINLNQELL) threads the bilayer. The Cytoplasmic segment spans residues 238–243 (AITQDT). The chain crosses the membrane as a helical span at residues 244–263 (KIIETGVLFLVAAAIILYDK). Residues 264 to 271 (KMFFEKLG) are Extracellular-facing.

It belongs to the peptidase U48 family.

It is found in the cell membrane. The catalysed reaction is Hydrolyzes the peptide bond -P2-(S-farnesyl or geranylgeranyl)C-P1'-P2'-P3'-COOH where P1' and P2' are amino acids with aliphatic sidechains and P3' is any C-terminal residue.. Its activity is regulated as follows. Activity is unaffected by metalloprotease inhibitors 5 mM EDTA and 5 mM Zn(2+). Activity partially inhibited by 1,10-phenanthroline and 1,7-phenanthroline. In terms of biological role, protease involved in the processing of a variety of prenylated proteins containing the C-terminal CAAX motif, where C is a cysteine modified with an isoprenoid lipid, A is an aliphatic amino acid and X is any C-terminal amino acid. Proteolytically removes the C-terminal three residues of farnesylated proteins, leaving the prenylated cysteine as the new C-terminus. Hydrolysis depends on a farnesylated cysteine residue and no activity is shown towards geranylgeranylated peptides. The polypeptide is CAAX prenyl protease 2 (Methanococcus maripaludis (strain DSM 14266 / JCM 13030 / NBRC 101832 / S2 / LL)).